Reading from the N-terminus, the 812-residue chain is ISWI one complex protein 2 (812 aa).

4 disordered regions span residues 1-21, 614-646, 679-704, and 762-812; these read MRTK…AGAA, MGNS…KRKP, AKQR…LEEL, and QTGS…PPTN. A compositionally biased stretch (polar residues) spans 627 to 638; the sequence is PQSTLEPSTKSS. Residues 673 to 714 are a coiled coil; that stretch reads ELKIIRAKQRKQQEDRERRKKMKEEKKRLEELAKKRELTESV. Residues 683 to 704 are compositionally biased toward basic and acidic residues; it reads KQQEDRERRKKMKEEKKRLEEL. A compositionally biased stretch (low complexity) spans 769 to 796; the sequence is PQAPQAPQTSQASIQPQQQQQQQQQQQP.

As to quaternary structure, component of the ISW1B complex, which at least consists of ISW1, IOC2 and IOC4.

The protein localises to the nucleus. Functionally, functions as a component of the ISW1B complex, which acts in remodeling the chromatin by catalyzing an ATP-dependent alteration in the structure of nucleosomal DNA. The ISW1B complex acts within coding regions to control the amount of RNA polymerase II released into productive elongation and to coordinate elongation with termination and pre-mRNA processing. The sequence is that of ISWI one complex protein 2 (IOC2) from Saccharomyces cerevisiae (strain ATCC 204508 / S288c) (Baker's yeast).